Reading from the N-terminus, the 426-residue chain is Serine--tRNA ligase (426 aa).

233–235 lines the L-serine pocket; it reads TAE. Residue 264–266 participates in ATP binding; that stretch reads RSE. Glu-287 is an L-serine binding site. Residue 351 to 354 coordinates ATP; it reads EISS. Ser-387 is a binding site for L-serine.

The protein belongs to the class-II aminoacyl-tRNA synthetase family. Type-1 seryl-tRNA synthetase subfamily. Homodimer. The tRNA molecule binds across the dimer.

It localises to the cytoplasm. It carries out the reaction tRNA(Ser) + L-serine + ATP = L-seryl-tRNA(Ser) + AMP + diphosphate + H(+). The catalysed reaction is tRNA(Sec) + L-serine + ATP = L-seryl-tRNA(Sec) + AMP + diphosphate + H(+). The protein operates within aminoacyl-tRNA biosynthesis; selenocysteinyl-tRNA(Sec) biosynthesis; L-seryl-tRNA(Sec) from L-serine and tRNA(Sec): step 1/1. Its function is as follows. Catalyzes the attachment of serine to tRNA(Ser). Is also able to aminoacylate tRNA(Sec) with serine, to form the misacylated tRNA L-seryl-tRNA(Sec), which will be further converted into selenocysteinyl-tRNA(Sec). The sequence is that of Serine--tRNA ligase from Pseudomonas paraeruginosa (strain DSM 24068 / PA7) (Pseudomonas aeruginosa (strain PA7)).